Here is a 233-residue protein sequence, read N- to C-terminus: Ribonuclease 3 (233 aa).

The RNase III domain maps to 9-136 (LQHFWEQFHL…IIGSVYLSGG (128 aa)). Mg(2+) is bound at residue Glu49. Residue Asp53 is part of the active site. Mg(2+) is bound by residues Asp122 and Glu125. Residue Glu125 is part of the active site. The DRBM domain maps to 162–231 (DSKSALQEFV…ARAALALLKV (70 aa)).

It belongs to the ribonuclease III family. Homodimer. The cofactor is Mg(2+).

It is found in the cytoplasm. The catalysed reaction is Endonucleolytic cleavage to 5'-phosphomonoester.. Its function is as follows. Digests double-stranded RNA. Involved in the processing of primary rRNA transcript to yield the immediate precursors to the large and small rRNAs (23S and 16S). Processes some mRNAs, and tRNAs when they are encoded in the rRNA operon. Processes pre-crRNA and tracrRNA of type II CRISPR loci if present in the organism. The sequence is that of Ribonuclease 3 from Moorella thermoacetica (strain ATCC 39073 / JCM 9320).